We begin with the raw amino-acid sequence, 155 residues long: Transcriptional repressor NrdR (155 aa).

A zinc finger lies at 3–34; that stretch reads CPFCQHDDTQVLDTRVSEEGDSIRRRRRCTSC. The ATP-cone domain occupies 49–139; sequence PVVVKKNGSR…VYKSFEDVAE (91 aa).

Belongs to the NrdR family. It depends on Zn(2+) as a cofactor.

Negatively regulates transcription of bacterial ribonucleotide reductase nrd genes and operons by binding to NrdR-boxes. In Janthinobacterium sp. (strain Marseille) (Minibacterium massiliensis), this protein is Transcriptional repressor NrdR.